A 350-amino-acid chain; its full sequence is Dihydroorotase (350 aa).

Residues His17 and His19 each coordinate Zn(2+). Residues 19 to 21 and Asn45 contribute to the substrate site; that span reads HFR. Lys103, His140, and His178 together coordinate Zn(2+). An N6-carboxylysine modification is found at Lys103. His140 provides a ligand contact to substrate. Leu223 contacts substrate. Asp251 contributes to the Zn(2+) binding site. Asp251 is an active-site residue. Residues His255 and Ala267 each coordinate substrate.

This sequence belongs to the metallo-dependent hydrolases superfamily. DHOase family. Class II DHOase subfamily. Homodimer. Requires Zn(2+) as cofactor.

The enzyme catalyses (S)-dihydroorotate + H2O = N-carbamoyl-L-aspartate + H(+). It functions in the pathway pyrimidine metabolism; UMP biosynthesis via de novo pathway; (S)-dihydroorotate from bicarbonate: step 3/3. Its function is as follows. Catalyzes the reversible cyclization of carbamoyl aspartate to dihydroorotate. The polypeptide is Dihydroorotase (Photorhabdus laumondii subsp. laumondii (strain DSM 15139 / CIP 105565 / TT01) (Photorhabdus luminescens subsp. laumondii)).